Consider the following 223-residue polypeptide: Cytidylate kinase (223 aa).

10–18 (GPAGAGKST) serves as a coordination point for ATP.

Belongs to the cytidylate kinase family. Type 1 subfamily.

Its subcellular location is the cytoplasm. The enzyme catalyses CMP + ATP = CDP + ADP. The catalysed reaction is dCMP + ATP = dCDP + ADP. This is Cytidylate kinase from Exiguobacterium sibiricum (strain DSM 17290 / CCUG 55495 / CIP 109462 / JCM 13490 / 255-15).